Here is a 302-residue protein sequence, read N- to C-terminus: Protein NEOXANTHIN-DEFICIENT 1 (302 aa).

Required for neoxanthin biosynthesis. Probably not involved directly in the enzymatic conversion of violaxanthin to neoxanthin. Is necessary but not sufficient for neoxanthin synthesis. In Oryza sativa subsp. japonica (Rice), this protein is Protein NEOXANTHIN-DEFICIENT 1.